A 192-amino-acid chain; its full sequence is Sarcoplasmic calcium-binding protein, beta chain (192 aa).

An N-acetylalanine modification is found at Ala1. EF-hand domains are found at residues 4–39, 56–91, 100–135, and 136–171; these read WDNR…VTLI, IMAN…NCKG, AFKV…RSAF, and ADVK…YAQF. Residues Asp17, Asp19, Asp21, Asp28, Asp69, Asn71, Asp73, Glu75, Glu80, Asp113, Asp115, Asp117, Met119, and Glu124 each coordinate Ca(2+).

As to quaternary structure, SCPs from crayfish, lobster, and shrimp are polymorphic dimers; three isotypes (alpha-alpha, alpha-beta, and beta-beta) have been identified.

Like parvalbumins, SCPs seem to be more abundant in fast contracting muscles, but no functional relationship can be established from this distribution. This is Sarcoplasmic calcium-binding protein, beta chain from Penaeus sp. (Penoeid shrimp).